Reading from the N-terminus, the 421-residue chain is Gamma-glutamyl phosphate reductase (421 aa).

Belongs to the gamma-glutamyl phosphate reductase family.

Its subcellular location is the cytoplasm. It catalyses the reaction L-glutamate 5-semialdehyde + phosphate + NADP(+) = L-glutamyl 5-phosphate + NADPH + H(+). It functions in the pathway amino-acid biosynthesis; L-proline biosynthesis; L-glutamate 5-semialdehyde from L-glutamate: step 2/2. Catalyzes the NADPH-dependent reduction of L-glutamate 5-phosphate into L-glutamate 5-semialdehyde and phosphate. The product spontaneously undergoes cyclization to form 1-pyrroline-5-carboxylate. The polypeptide is Gamma-glutamyl phosphate reductase (Pseudomonas aeruginosa (strain LESB58)).